Reading from the N-terminus, the 971-residue chain is DNA-directed RNA polymerase subunit Rpo1N (971 aa).

Residue M1 is modified to Blocked amino end (Met). Residues C62, C65, C72, H75, C102, C105, C149, and C152 each coordinate Zn(2+). The interval 185 to 204 is disordered; it reads SMQPDEDEDDAGVSPQELAE. Residues D527, D529, and D531 each contribute to the Mg(2+) site. The segment at 951–971 is disordered; the sequence is VEEPPTNLSEHGAAWEVESDD.

Belongs to the RNA polymerase beta' chain family. As to quaternary structure, part of the RNA polymerase complex. The cofactor is Mg(2+). Zn(2+) is required as a cofactor. The N-terminus is blocked.

It localises to the cytoplasm. The catalysed reaction is RNA(n) + a ribonucleoside 5'-triphosphate = RNA(n+1) + diphosphate. Functionally, DNA-dependent RNA polymerase (RNAP) catalyzes the transcription of DNA into RNA using the four ribonucleoside triphosphates as substrates. Forms the clamp head domain. In Halobacterium salinarum (strain ATCC 29341 / DSM 671 / R1), this protein is DNA-directed RNA polymerase subunit Rpo1N.